The primary structure comprises 323 residues: Breast cancer metastasis-suppressor 1-like protein (323 aa).

Over residues 1-15 (MPVHSREKKENNHDE) the composition is skewed to basic and acidic residues. The interval 1 to 56 (MPVHSREKKENNHDEMEVDYGENEGSTSEEEETESSSVSEEGDSSEMDDEDCERRR) is disordered. The span at 16-51 (MEVDYGENEGSTSEEEETESSSVSEEGDSSEMDDED) shows a compositional bias: acidic residues. Coiled coils occupy residues 50 to 82 (EDCE…KERL) and 147 to 178 (EKLL…ITSE).

The protein belongs to the BRMS1 family.

The protein resides in the nucleus. Its function is as follows. Involved in the histone deacetylase (HDAC1)-dependent transcriptional repression activity. This is Breast cancer metastasis-suppressor 1-like protein (BRMS1L) from Gallus gallus (Chicken).